A 60-amino-acid polypeptide reads, in one-letter code: MSTEKRIEATAKNIEGKLQEVIGEVTGNPSDKAEGKAKQAESQVIHTTENIKDELKKAID.

It belongs to the UPF0337 (CsbD) family.

The sequence is that of UPF0337 protein asr4653 from Nostoc sp. (strain PCC 7120 / SAG 25.82 / UTEX 2576).